The sequence spans 375 residues: Succinyl-diaminopimelate desuccinylase (375 aa).

Zn(2+) is bound at residue histidine 66. The active site involves aspartate 68. Residue aspartate 99 participates in Zn(2+) binding. The active-site Proton acceptor is glutamate 133. Zn(2+) contacts are provided by glutamate 134, glutamate 162, and histidine 348.

This sequence belongs to the peptidase M20A family. DapE subfamily. As to quaternary structure, homodimer. Zn(2+) is required as a cofactor. Co(2+) serves as cofactor.

The catalysed reaction is N-succinyl-(2S,6S)-2,6-diaminopimelate + H2O = (2S,6S)-2,6-diaminopimelate + succinate. It participates in amino-acid biosynthesis; L-lysine biosynthesis via DAP pathway; LL-2,6-diaminopimelate from (S)-tetrahydrodipicolinate (succinylase route): step 3/3. Its function is as follows. Catalyzes the hydrolysis of N-succinyl-L,L-diaminopimelic acid (SDAP), forming succinate and LL-2,6-diaminopimelate (DAP), an intermediate involved in the bacterial biosynthesis of lysine and meso-diaminopimelic acid, an essential component of bacterial cell walls. The protein is Succinyl-diaminopimelate desuccinylase of Klebsiella pneumoniae subsp. pneumoniae (strain ATCC 700721 / MGH 78578).